The primary structure comprises 63 residues: Overexpressed in colon carcinoma 1 protein homolog (63 aa).

The segment covering M1–S10 has biased composition (polar residues). The interval M1 to G39 is disordered.

This sequence belongs to the OCC1 family.

The polypeptide is Overexpressed in colon carcinoma 1 protein homolog (Mus musculus (Mouse)).